We begin with the raw amino-acid sequence, 118 residues long: Putative pterin-4-alpha-carbinolamine dehydratase (118 aa).

The protein belongs to the pterin-4-alpha-carbinolamine dehydratase family.

The catalysed reaction is (4aS,6R)-4a-hydroxy-L-erythro-5,6,7,8-tetrahydrobiopterin = (6R)-L-erythro-6,7-dihydrobiopterin + H2O. This chain is Putative pterin-4-alpha-carbinolamine dehydratase, found in Pseudomonas fluorescens (strain SBW25).